Consider the following 125-residue polypeptide: MIQALLVAVGGAIGSVLRYFVGQWALRLMGPAFPWGTLAVNVVGCFVIGVFAELVTRKFNASVELRLLLITGFLGGFTTFSAFSLDAISLFERGEAVAGGIYIAASVGLSMAAVFAGLAIMRALV.

The next 4 membrane-spanning stretches (helical) occupy residues 1–21 (MIQALLVAVGGAIGSVLRYFV), 32–52 (AFPWGTLAVNVVGCFVIGVFA), 68–88 (LLITGFLGGFTTFSAFSLDAI), and 101–121 (IYIAASVGLSMAAVFAGLAIM). Residues glycine 75 and threonine 78 each contribute to the Na(+) site.

Belongs to the fluoride channel Fluc/FEX (TC 1.A.43) family.

It localises to the cell inner membrane. The catalysed reaction is fluoride(in) = fluoride(out). With respect to regulation, na(+) is not transported, but it plays an essential structural role and its presence is essential for fluoride channel function. Its function is as follows. Fluoride-specific ion channel. Important for reducing fluoride concentration in the cell, thus reducing its toxicity. The polypeptide is Fluoride-specific ion channel FluC (Rhizobium etli (strain ATCC 51251 / DSM 11541 / JCM 21823 / NBRC 15573 / CFN 42)).